Here is a 192-residue protein sequence, read N- to C-terminus: tRNA (cytidine(56)-2'-O)-methyltransferase (192 aa).

S-adenosyl-L-methionine-binding positions include Leu84 and 112–116 (GGEKV).

The protein belongs to the aTrm56 family. Homodimer.

Its subcellular location is the cytoplasm. The enzyme catalyses cytidine(56) in tRNA + S-adenosyl-L-methionine = 2'-O-methylcytidine(56) in tRNA + S-adenosyl-L-homocysteine + H(+). Functionally, specifically catalyzes the AdoMet-dependent 2'-O-ribose methylation of cytidine at position 56 in tRNAs. The sequence is that of tRNA (cytidine(56)-2'-O)-methyltransferase from Halobacterium salinarum (strain ATCC 700922 / JCM 11081 / NRC-1) (Halobacterium halobium).